The following is a 150-amino-acid chain: D-aminoacyl-tRNA deacylase (150 aa).

The short motif at 140 to 141 (GP) is the Gly-cisPro motif, important for rejection of L-amino acids element.

The protein belongs to the DTD family. In terms of assembly, homodimer.

The protein localises to the cytoplasm. The enzyme catalyses glycyl-tRNA(Ala) + H2O = tRNA(Ala) + glycine + H(+). It carries out the reaction a D-aminoacyl-tRNA + H2O = a tRNA + a D-alpha-amino acid + H(+). Functionally, an aminoacyl-tRNA editing enzyme that deacylates mischarged D-aminoacyl-tRNAs. Also deacylates mischarged glycyl-tRNA(Ala), protecting cells against glycine mischarging by AlaRS. Acts via tRNA-based rather than protein-based catalysis; rejects L-amino acids rather than detecting D-amino acids in the active site. By recycling D-aminoacyl-tRNA to D-amino acids and free tRNA molecules, this enzyme counteracts the toxicity associated with the formation of D-aminoacyl-tRNA entities in vivo and helps enforce protein L-homochirality. The protein is D-aminoacyl-tRNA deacylase (DTD1) of Eremothecium gossypii (strain ATCC 10895 / CBS 109.51 / FGSC 9923 / NRRL Y-1056) (Yeast).